Reading from the N-terminus, the 624-residue chain is Kelch-like protein diablo (624 aa).

Positions 1 to 21 (MGDPLLPGSTGLGSGPAAAAT) are enriched in low complexity. Positions 1-55 (MGDPLLPGSTGLGSGPAAAATGGSGTTGTGLGSGGTSGAERPPSPARLTHTSEKH) are disordered. The span at 22 to 37 (GGSGTTGTGLGSGGTS) shows a compositional bias: gly residues. Residues 73 to 140 (CDVVLNVGGR…CYTAHIIVEE (68 aa)) enclose the BTB domain. Positions 175–277 (CLGIRAFADT…SPKFLVGTVG (103 aa)) constitute a BACK domain. Kelch repeat units follow at residues 324-370 (VLFA…VLND), 372-418 (LYAV…VLDG), 419-465 (FLYA…VLSG), 467-512 (LYAI…VFNN), 514-559 (IYAV…VVNG), and 560-606 (QLYA…VMRA).

Its pathway is protein modification; protein ubiquitination. Functionally, probable substrate-specific adapter of an E3 ubiquitin-protein ligase complex which mediates the ubiquitination and subsequent proteasomal degradation of target proteins. May have a role in synapse differentiation and growth. The chain is Kelch-like protein diablo from Drosophila virilis (Fruit fly).